The following is a 663-amino-acid chain: Bifunctional polymyxin resistance protein ArnA (663 aa).

A formyltransferase ArnAFT region spans residues 1–304; sequence MKAVVFAYHD…ELGLVAGMRL (304 aa). Histidine 104 acts as the Proton donor; for formyltransferase activity in catalysis. (6R)-10-formyltetrahydrofolate is bound by residues arginine 114 and 136-140; that span reads TMRPD. Positions 316–663 are dehydrogenase ArnADH; it reads RLTRVLILGV…GAVSTGVEHD (348 aa). Residues aspartate 349 and 370-371 contribute to the NAD(+) site; that span reads DI. UDP-alpha-D-glucuronate contacts are provided by residues alanine 395, tyrosine 400, and 434–435; that span reads TS. The active-site Proton acceptor; for decarboxylase activity is the glutamate 436. Residues arginine 462, asparagine 494, 528–537, and tyrosine 615 contribute to the UDP-alpha-D-glucuronate site; that span reads QLVDGGAQKR. The active-site Proton donor; for decarboxylase activity is the arginine 621.

The protein in the N-terminal section; belongs to the Fmt family. UDP-L-Ara4N formyltransferase subfamily. In the C-terminal section; belongs to the NAD(P)-dependent epimerase/dehydratase family. UDP-glucuronic acid decarboxylase subfamily. In terms of assembly, homohexamer, formed by a dimer of trimers.

It catalyses the reaction UDP-alpha-D-glucuronate + NAD(+) = UDP-beta-L-threo-pentopyranos-4-ulose + CO2 + NADH. The catalysed reaction is UDP-4-amino-4-deoxy-beta-L-arabinose + (6R)-10-formyltetrahydrofolate = UDP-4-deoxy-4-formamido-beta-L-arabinose + (6S)-5,6,7,8-tetrahydrofolate + H(+). It functions in the pathway nucleotide-sugar biosynthesis; UDP-4-deoxy-4-formamido-beta-L-arabinose biosynthesis; UDP-4-deoxy-4-formamido-beta-L-arabinose from UDP-alpha-D-glucuronate: step 1/3. It participates in nucleotide-sugar biosynthesis; UDP-4-deoxy-4-formamido-beta-L-arabinose biosynthesis; UDP-4-deoxy-4-formamido-beta-L-arabinose from UDP-alpha-D-glucuronate: step 3/3. Its pathway is bacterial outer membrane biogenesis; lipopolysaccharide biosynthesis. In terms of biological role, bifunctional enzyme that catalyzes the oxidative decarboxylation of UDP-glucuronic acid (UDP-GlcUA) to UDP-4-keto-arabinose (UDP-Ara4O) and the addition of a formyl group to UDP-4-amino-4-deoxy-L-arabinose (UDP-L-Ara4N) to form UDP-L-4-formamido-arabinose (UDP-L-Ara4FN). The modified arabinose is attached to lipid A and is required for resistance to polymyxin and cationic antimicrobial peptides. This chain is Bifunctional polymyxin resistance protein ArnA, found in Aeromonas salmonicida (strain A449).